A 760-amino-acid polypeptide reads, in one-letter code: Forkhead box protein M1 (760 aa).

Disordered stretches follow at residues 1–54 (MRTS…AESS) and 95–167 (GKES…SYAG). 2 stretches are compositionally biased toward low complexity: residues 43 to 54 (PAQASQEVAESS) and 110 to 124 (SSGGPSSHPSQPQAH). Basic and acidic residues predominate over residues 125–134 (SSRDSKRAEV). Over residues 140–149 (GPKPAAKGVP) the composition is skewed to low complexity. Glycyl lysine isopeptide (Lys-Gly) (interchain with G-Cter in SUMO2) cross-links involve residues lysine 199 and lysine 323. The fork-head DNA-binding region spans 233–325 (ERPPYSYMAM…LTLDQVFKPL (93 aa)). The interval 323–348 (KPLEPGSPQSPEHLESQQKRPNPELH) is disordered. Position 329 is a phosphoserine (serine 329). Basic and acidic residues predominate over residues 334 to 348 (EHLESQQKRPNPELH). Residue lysine 354 forms a Glycyl lysine isopeptide (Lys-Gly) (interchain with G-Cter in SUMO2) linkage. The residue at position 374 (serine 374) is a Phosphoserine; by CHEK2. Residues lysine 420 and lysine 438 each participate in a glycyl lysine isopeptide (Lys-Gly) (interchain with G-Cter in SUMO2) cross-link. 3 disordered regions span residues 500–560 (SWED…PDLF), 577–635 (ESSE…LDFS), and 660–709 (PLKS…IPSL). At serine 521 the chain carries Phosphoserine. Residues 531 to 542 (VTKRREKREVSR) show a composition bias toward basic and acidic residues. Residues 604–613 (PVSSTPSKSV) are compositionally biased toward polar residues. Phosphothreonine; by CDK1 is present on threonine 608. Threonine 624 carries the phosphothreonine modification. Phosphoserine; by PLK1 occurs at positions 727 and 736.

Phosphorylated in M (mitotic) phase. Phosphorylation by the checkpoint kinase CHEK2 in response to DNA damage increases the FOXM1 protein stability probably stimulating the transcription of genes involved in DNA repair. Phosphorylated by CDK1 in late S and G2 phases, creating docking sites for the POLO box domains of PLK1. Subsequently, PLK1 binds and phosphorylates FOXM1, leading to activation of transcriptional activity and subsequent enhanced expression of key mitotic regulators. Phosphorylated by GSK3B leading to ubiquitination and proteasomal degradation. As to expression, expressed in fetal heart, brain, liver, lung, kidney and limb, but only in adult thymus. Appears to be expressed only in adult organs containing proliferating/cycling cells or in response to growth factors.

The protein localises to the nucleus. Transcription factor regulating the expression of cell cycle genes essential for DNA replication and mitosis. Plays a role in the control of cell proliferation. Also plays a role in DNA break repair, participating in the DNA damage checkpoint response. Promotes transcription of PHB2. In Mus musculus (Mouse), this protein is Forkhead box protein M1 (Foxm1).